The chain runs to 156 residues: Ribonuclease H (156 aa).

An RNase H type-1 domain is found at 7–148 (QDKIVMIATD…ADQLASDAAI (142 aa)). Positions 16, 54, 76, and 140 each coordinate Mg(2+).

This sequence belongs to the RNase H family. Monomer. Mg(2+) is required as a cofactor.

It localises to the cytoplasm. It carries out the reaction Endonucleolytic cleavage to 5'-phosphomonoester.. Endonuclease that specifically degrades the RNA of RNA-DNA hybrids. The protein is Ribonuclease H (rnhA) of Zymomonas mobilis subsp. mobilis (strain ATCC 31821 / ZM4 / CP4).